The chain runs to 504 residues: Maturase K (504 aa).

Belongs to the intron maturase 2 family. MatK subfamily.

It localises to the plastid. The protein resides in the chloroplast. Functionally, usually encoded in the trnK tRNA gene intron. Probably assists in splicing its own and other chloroplast group II introns. In Erythrina crista-galli (Cockspur coral tree), this protein is Maturase K.